We begin with the raw amino-acid sequence, 180 residues long: Immediate early response gene 2 protein (180 aa).

The segment at 53–135 is disordered; that stretch reads MSEKSGQSVT…KRRSKTATDS (83 aa). Polar residues predominate over residues 56–92; that stretch reads KSGQSVTEECTSHTQEPMDTSSSTATPLRETSGQSSE. Over residues 93–103 the composition is skewed to basic and acidic residues; that stretch reads DGQRSGLEGHP.

The protein belongs to the IER family. In terms of assembly, interacts with FIBPB.

The protein localises to the nucleus. Its subcellular location is the cytoplasm. Its function is as follows. DNA-binding protein that seems to act as a transcription factor. Mediates with FIBPB FGF-signaling in Kupffer's vesicle ciliogenesis and in the establishment of laterality in the embryo. This chain is Immediate early response gene 2 protein, found in Danio rerio (Zebrafish).